Reading from the N-terminus, the 324-residue chain is ATP-dependent 6-phosphofructokinase (324 aa).

ATP is bound at residue Gly-11. 21–25 (RAVVR) contacts ADP. Residues 72–73 (RE) and 102–105 (GNGS) contribute to the ATP site. Residue Asn-103 coordinates Mg(2+). 126-128 (TID) provides a ligand contact to substrate. Catalysis depends on Asp-128, which acts as the Proton acceptor. Arg-155 serves as a coordination point for ADP. Residues Arg-163 and 170–172 (MGR) contribute to the substrate site. Residues 186 to 188 (GAD), Arg-212, and 214 to 216 (KKF) each bind ADP. Substrate is bound by residues Glu-223, Arg-248, and 254–257 (YIQR).

It belongs to the phosphofructokinase type A (PFKA) family. ATP-dependent PFK group I subfamily. Prokaryotic clade 'B1' sub-subfamily. In terms of assembly, homotetramer. Mg(2+) is required as a cofactor.

Its subcellular location is the cytoplasm. The enzyme catalyses beta-D-fructose 6-phosphate + ATP = beta-D-fructose 1,6-bisphosphate + ADP + H(+). The protein operates within carbohydrate degradation; glycolysis; D-glyceraldehyde 3-phosphate and glycerone phosphate from D-glucose: step 3/4. Its activity is regulated as follows. Allosterically activated by ADP and other diphosphonucleosides, and allosterically inhibited by phosphoenolpyruvate. Functionally, catalyzes the phosphorylation of D-fructose 6-phosphate to fructose 1,6-bisphosphate by ATP, the first committing step of glycolysis. This chain is ATP-dependent 6-phosphofructokinase, found in Persephonella marina (strain DSM 14350 / EX-H1).